Here is a 482-residue protein sequence, read N- to C-terminus: Abscisic acid 8'-hydroxylase 2 (482 aa).

The helical transmembrane segment at 20-40 threads the bilayer; that stretch reads PALITLTIVVVVVVLLFKWWL. Cys431 lines the heme pocket.

Belongs to the cytochrome P450 family. Heme is required as a cofactor. In terms of tissue distribution, mainly expressed in dry seeds. Lower expression in rosette leaves, flowers, siliques and stems. Not expressed in roots. Expressed in both endosperm and vascular tissues of embryo during the seed development and in cortex and endodermis in germinating embryo.

It is found in the membrane. It catalyses the reaction 2-cis-(+)-abscisate + reduced [NADPH--hemoprotein reductase] + O2 = (+)-8'-hydroxyabscisate + oxidized [NADPH--hemoprotein reductase] + H2O + H(+). It functions in the pathway plant hormone degradation; abscisic acid degradation. Functionally, involved in the oxidative degradation of abscisic acid, but not in the isomerization of the produced 8'-hydroxyabscisic acid (8'-OH-ABA) to (-)-phaseic acid (PA). Involved in the control of seed dormancy and germination. In Arabidopsis thaliana (Mouse-ear cress), this protein is Abscisic acid 8'-hydroxylase 2 (CYP707A2).